The primary structure comprises 227 residues: Ribonuclease 3 (227 aa).

In terms of domain architecture, RNase III spans 4–126 (LDRLERKIGY…IIGAMSLDQG (123 aa)). Residue Glu39 participates in Mg(2+) binding. Asp43 is a catalytic residue. Residues Asp112 and Glu115 each coordinate Mg(2+). The active site involves Glu115. A DRBM domain is found at 153–226 (DAKTRLQEYL…AEQILKELDI (74 aa)).

Belongs to the ribonuclease III family. As to quaternary structure, homodimer. Requires Mg(2+) as cofactor.

It localises to the cytoplasm. The catalysed reaction is Endonucleolytic cleavage to 5'-phosphomonoester.. Its function is as follows. Digests double-stranded RNA. Involved in the processing of primary rRNA transcript to yield the immediate precursors to the large and small rRNAs (23S and 16S). Processes some mRNAs, and tRNAs when they are encoded in the rRNA operon. Processes pre-crRNA and tracrRNA of type II CRISPR loci if present in the organism. The protein is Ribonuclease 3 of Haemophilus influenzae (strain ATCC 51907 / DSM 11121 / KW20 / Rd).